We begin with the raw amino-acid sequence, 930 residues long: uncharacterized protein (930 aa).

A signal peptide spans 1–20 (MPSFVLWTFHLCSQWFQGLT). Residues asparagine 137, asparagine 146, asparagine 164, asparagine 210, asparagine 257, asparagine 628, asparagine 717, and asparagine 799 are each glycosylated (N-linked (GlcNAc...) asparagine).

Its subcellular location is the secreted. This is an uncharacterized protein from Arthroderma benhamiae (strain ATCC MYA-4681 / CBS 112371) (Trichophyton mentagrophytes).